Consider the following 605-residue polypeptide: Dihydrogeodin oxidase (605 aa).

The N-terminal stretch at 1 to 18 is a signal peptide; sequence MPSLKDWVVAGLVPMTIA. Residues N27, N107, and N112 are each glycosylated (N-linked (GlcNAc...) asparagine). Plastocyanin-like domains follow at residues 65–183, 189–347, and 424–567; these read TVTQ…GPSS, DLGP…YDES, and YVDW…KIKP. Positions 117, 119, 161, and 163 each coordinate Cu cation. 2 N-linked (GlcNAc...) asparagine glycosylation sites follow: N278 and N467. Cu cation-binding residues include H484, H487, H489, H543, C544, H545, and H549.

Belongs to the multicopper oxidase family. The cofactor is Cu cation.

It catalyses the reaction 2 dihydrogeodin + O2 + 2 H(+) = 2 (+)-geodin + 2 H2O. Its pathway is secondary metabolite biosynthesis. Its function is as follows. Dihydrogeodin oxidase; part of the gene cluster that mediates the biosynthesis of geodin, an intermediate in the biosynthesis of other natural products. The pathway begins with the synthesis of atrochrysone thioester by the polyketide synthase (PKS) gedC. The atrochrysone carboxyl ACP thioesterase gedB then breaks the thioester bond and releases the atrochrysone carboxylic acid from gedC. The atrochrysone carboxylic acid is then converted to atrochrysone which is further transformed into emodinanthrone. The next step is performed by the emodinanthrone oxygenase gedH that catalyzes the oxidation of emodinanthrone to emodin. Emodin O-methyltransferase encoded probably by gedA then catalyzes methylation of the 8-hydroxy group of emodin to form questin. Ring cleavage of questin by questin oxidase gedK leads to desmethylsulochrin via several intermediates including questin epoxide. Another methylation step probably catalyzed by methyltransferase gedG leads to the formation of sulochrin which is further converted to dihydrogeodin by the sulochrin halogenase gedL. Finally, the dihydrogeodin oxidase gedJ catalyzes the stereospecific phenol oxidative coupling reaction converting dihydrogeodin to geodin. The protein is Dihydrogeodin oxidase of Aspergillus terreus (strain NIH 2624 / FGSC A1156).